Here is a 150-residue protein sequence, read N- to C-terminus: U1 small nuclear ribonucleoprotein C (150 aa).

The Matrin-type zinc-finger motif lies at 4–36; the sequence is YYCDYCKSYLTHDTMSVRKSHLQGRNHIKFYCD. The disordered stretch occupies residues 66–127; sequence SDAKKSNGSS…PPNLSGLPLP (62 aa). A compositionally biased stretch (basic and acidic residues) spans 80–92; it reads DIDKKENSSDHNK. Over residues 103 to 112 the composition is skewed to acidic residues; the sequence is NDNDDDDDEM.

It belongs to the U1 small nuclear ribonucleoprotein C family. As to quaternary structure, U1 snRNP is composed of the 7 core Sm proteins B/B', D1, D2, D3, E, F and G that assemble in a heptameric protein ring on the Sm site of the small nuclear RNA to form the core snRNP, and at least 3 U1 snRNP-specific proteins U1-70K, U1-A and U1-C. U1-C interacts with U1 snRNA and the 5' splice-site region of the pre-mRNA.

The protein localises to the nucleus. Functionally, component of the spliceosomal U1 snRNP, which is essential for recognition of the pre-mRNA 5' splice-site and the subsequent assembly of the spliceosome. U1-C is directly involved in initial 5' splice-site recognition for both constitutive and regulated alternative splicing. The interaction with the 5' splice-site seems to precede base-pairing between the pre-mRNA and the U1 snRNA. Stimulates commitment or early (E) complex formation by stabilizing the base pairing of the 5' end of the U1 snRNA and the 5' splice-site region. The sequence is that of U1 small nuclear ribonucleoprotein C from Candida albicans (strain WO-1) (Yeast).